Here is an 82-residue protein sequence, read N- to C-terminus: Exodeoxyribonuclease 7 small subunit (82 aa).

The protein belongs to the XseB family. In terms of assembly, heterooligomer composed of large and small subunits.

It localises to the cytoplasm. The catalysed reaction is Exonucleolytic cleavage in either 5'- to 3'- or 3'- to 5'-direction to yield nucleoside 5'-phosphates.. Functionally, bidirectionally degrades single-stranded DNA into large acid-insoluble oligonucleotides, which are then degraded further into small acid-soluble oligonucleotides. This chain is Exodeoxyribonuclease 7 small subunit, found in Mycobacterium avium (strain 104).